We begin with the raw amino-acid sequence, 308 residues long: Tyramine--L-glutamate ligase (308 aa).

An ATP-grasp domain is found at 89–291; sequence KSLLKSENID…LAELLIKNAN (203 aa). 115-192 serves as a coordination point for ATP; the sequence is TKIIESYPVK…QEFIDGENLS (78 aa). The Mg(2+) site is built by Asp-252, Glu-264, and Asn-266. The Mn(2+) site is built by Asp-252, Glu-264, and Asn-266.

Mg(2+) is required as a cofactor. The cofactor is Mn(2+).

The catalysed reaction is tyramine + L-glutamate + ATP = gamma-L-glutamyltyramine + ADP + phosphate + H(+). Its pathway is cofactor biosynthesis; methanofuran biosynthesis. In terms of biological role, catalyzes the formation of an amide bond between tyramine and the gamma carboxy group of L-glutamate. The enzyme also accepts phenylethylamine in vitro. The polypeptide is Tyramine--L-glutamate ligase (mfnD) (Methanocaldococcus jannaschii (strain ATCC 43067 / DSM 2661 / JAL-1 / JCM 10045 / NBRC 100440) (Methanococcus jannaschii)).